We begin with the raw amino-acid sequence, 226 residues long: Biosynthetic peptidoglycan transglycosylase (226 aa).

The chain crosses the membrane as a helical span at residues 8 to 28 (FFGWTWFVMWRFLLLLALLLL).

The protein belongs to the glycosyltransferase 51 family.

The protein resides in the cell inner membrane. The enzyme catalyses [GlcNAc-(1-&gt;4)-Mur2Ac(oyl-L-Ala-gamma-D-Glu-L-Lys-D-Ala-D-Ala)](n)-di-trans,octa-cis-undecaprenyl diphosphate + beta-D-GlcNAc-(1-&gt;4)-Mur2Ac(oyl-L-Ala-gamma-D-Glu-L-Lys-D-Ala-D-Ala)-di-trans,octa-cis-undecaprenyl diphosphate = [GlcNAc-(1-&gt;4)-Mur2Ac(oyl-L-Ala-gamma-D-Glu-L-Lys-D-Ala-D-Ala)](n+1)-di-trans,octa-cis-undecaprenyl diphosphate + di-trans,octa-cis-undecaprenyl diphosphate + H(+). The protein operates within cell wall biogenesis; peptidoglycan biosynthesis. Its function is as follows. Peptidoglycan polymerase that catalyzes glycan chain elongation from lipid-linked precursors. The polypeptide is Biosynthetic peptidoglycan transglycosylase (Shewanella frigidimarina (strain NCIMB 400)).